The chain runs to 1064 residues: Adenylate cyclase type 4 (1064 aa).

Topologically, residues 1-28 (MARLFSPRPPPSEDLFYETYYSLSQQYP) are cytoplasmic. 6 helical membrane-spanning segments follow: residues 29–50 (LLIL…VAWA), 61–80 (FLTT…GLAS), 94–117 (GLIW…VSAW), 120–138 (VSFF…PLGM), 141–162 (AAAA…YLGW), and 170–190 (LLPQ…VGAY). Over 191-582 (HKALMERALR…YRLSALPAFK (392 aa)) the chain is Cytoplasmic. Mg(2+) is bound by residues aspartate 278, isoleucine 279, and aspartate 322. ATP contacts are provided by residues 278–283 (DIVGFT), 320–322 (LGD), and arginine 366. The interval 498 to 523 (DSPASTSTPLPEKAFSPQWSLDRSRT) is disordered. Position 517 is a phosphoserine (serine 517). Threonine 533 is modified (phosphothreonine). 3 helical membrane-spanning segments follow: residues 583–604 (YYAA…LVTT), 608–630 (ALAT…CFSE), and 661–684 (VALG…FLPV). At 685 to 707 (SSDCPFLAPNVSSVAFNTSWELP) the chain is on the extracellular side. N-linked (GlcNAc...) asparagine glycans are attached at residues asparagine 694 and asparagine 701. 3 helical membrane-spanning segments follow: residues 708 to 733 (ASLP…SLFL), 741 to 761 (LLLL…SHAW), and 788 to 804 (MGAI…LVLA). The Cytoplasmic portion of the chain corresponds to 805 to 1064 (RQNEYYCRLD…LTRTGSPSAS (260 aa)). ATP contacts are provided by residues lysine 914, 994-996 (DIW), 1001-1005 (NVASR), and lysine 1041.

The protein belongs to the adenylyl cyclase class-4/guanylyl cyclase family. Requires Mg(2+) as cofactor. The cofactor is Mn(2+). As to expression, widely distributed.

Its subcellular location is the cell membrane. The protein localises to the cytoplasm. It catalyses the reaction ATP = 3',5'-cyclic AMP + diphosphate. Its activity is regulated as follows. Activated by forskolin. Insensitive to calcium/calmodulin. Stimulated by GNAS and by the G-protein beta and gamma subunit complex. Functionally, catalyzes the formation of the signaling molecule cAMP in response to G-protein signaling. The protein is Adenylate cyclase type 4 (Adcy4) of Rattus norvegicus (Rat).